We begin with the raw amino-acid sequence, 193 residues long: 3-isopropylmalate dehydratase small subunit (193 aa).

This sequence belongs to the LeuD family. LeuD type 1 subfamily. Heterodimer of LeuC and LeuD.

The catalysed reaction is (2R,3S)-3-isopropylmalate = (2S)-2-isopropylmalate. Its pathway is amino-acid biosynthesis; L-leucine biosynthesis; L-leucine from 3-methyl-2-oxobutanoate: step 2/4. Functionally, catalyzes the isomerization between 2-isopropylmalate and 3-isopropylmalate, via the formation of 2-isopropylmaleate. The sequence is that of 3-isopropylmalate dehydratase small subunit from Bacillus cereus (strain ATCC 10987 / NRS 248).